Reading from the N-terminus, the 253-residue chain is Imidazole glycerol phosphate synthase subunit HisF (253 aa).

Active-site residues include D11 and D130.

The protein belongs to the HisA/HisF family. Heterodimer of HisH and HisF.

Its subcellular location is the cytoplasm. It catalyses the reaction 5-[(5-phospho-1-deoxy-D-ribulos-1-ylimino)methylamino]-1-(5-phospho-beta-D-ribosyl)imidazole-4-carboxamide + L-glutamine = D-erythro-1-(imidazol-4-yl)glycerol 3-phosphate + 5-amino-1-(5-phospho-beta-D-ribosyl)imidazole-4-carboxamide + L-glutamate + H(+). Its pathway is amino-acid biosynthesis; L-histidine biosynthesis; L-histidine from 5-phospho-alpha-D-ribose 1-diphosphate: step 5/9. IGPS catalyzes the conversion of PRFAR and glutamine to IGP, AICAR and glutamate. The HisF subunit catalyzes the cyclization activity that produces IGP and AICAR from PRFAR using the ammonia provided by the HisH subunit. The polypeptide is Imidazole glycerol phosphate synthase subunit HisF (Geobacter metallireducens (strain ATCC 53774 / DSM 7210 / GS-15)).